We begin with the raw amino-acid sequence, 1023 residues long: Probable histidine kinase 3 (1023 aa).

Over M1–W80 the chain is Cytoplasmic. The chain crosses the membrane as a helical span at residues W81–F101. Residues M102–P387 lie on the Extracellular side of the membrane. The CHASE domain maps to T151–G352. A helical transmembrane segment spans residues W388–F408. Residues Q409–E1023 are Cytoplasmic-facing. Residues T445 to R715 enclose the Histidine kinase domain. Residue H448 is modified to Phosphohistidine; by autocatalysis. 2 Response regulatory domains span residues N732–L854 and Q880–F1016. Residue D783 is modified to 4-aspartylphosphate. A disordered region spans residues L812–E831. Residues S817–D827 are compositionally biased toward polar residues. A 4-aspartylphosphate modification is found at D930.

Post-translationally, activation probably requires a transfer of a phosphate group between a His in the transmitter domain and an Asp of the receiver domain.

The protein localises to the cell membrane. The catalysed reaction is ATP + protein L-histidine = ADP + protein N-phospho-L-histidine.. Cytokinin receptor related to bacterial two-component regulators. Functions as a histidine kinase and transmits the stress signal to a downstream MAPK cascade. The protein is Probable histidine kinase 3 of Oryza sativa subsp. indica (Rice).